We begin with the raw amino-acid sequence, 131 residues long: Large ribosomal subunit protein bL17 (131 aa).

This sequence belongs to the bacterial ribosomal protein bL17 family. As to quaternary structure, part of the 50S ribosomal subunit. Contacts protein L32.

In Shewanella sp. (strain ANA-3), this protein is Large ribosomal subunit protein bL17.